A 253-amino-acid chain; its full sequence is Uracil-DNA glycosylase (253 aa).

Residue Asp79 is the Proton acceptor of the active site.

Belongs to the uracil-DNA glycosylase (UDG) superfamily. UNG family.

It localises to the cytoplasm. The enzyme catalyses Hydrolyzes single-stranded DNA or mismatched double-stranded DNA and polynucleotides, releasing free uracil.. Excises uracil residues from the DNA which can arise as a result of misincorporation of dUMP residues by DNA polymerase or due to deamination of cytosine. The sequence is that of Uracil-DNA glycosylase from Xylella fastidiosa (strain M12).